A 293-amino-acid chain; its full sequence is Glycine--tRNA ligase alpha subunit (293 aa).

The protein belongs to the class-II aminoacyl-tRNA synthetase family. As to quaternary structure, tetramer of two alpha and two beta subunits.

The protein localises to the cytoplasm. It catalyses the reaction tRNA(Gly) + glycine + ATP = glycyl-tRNA(Gly) + AMP + diphosphate. The sequence is that of Glycine--tRNA ligase alpha subunit from Acaryochloris marina (strain MBIC 11017).